The primary structure comprises 524 residues: Nif-specific regulatory protein (524 aa).

The segment at 1-182 is a domain; sequence MIHKSDSDTT…AQTIRLMILP (182 aa). One can recognise a GAF domain in the interval 35 to 176; sequence EASKTLQEVL…TVANLIAQTI (142 aa). In terms of domain architecture, Sigma-54 factor interaction spans 212 to 481; sequence MVGKSPAMRQ…DGWLDNSLDE (270 aa). Residues 240 to 247 and 303 to 312 contribute to the ATP site; these read GESGTGKE and ADGGTLFLDE. Residues 482-524 form a C-terminal DNA-binding domain region; sequence RQRLIAALEKAGWVQAKAARLLGMTPRQVAYRIQIMDITMPRL. Positions 496–515 form a DNA-binding region, H-T-H motif; it reads QAKAARLLGMTPRQVAYRIQ.

Interacts with sigma-54.

Its function is as follows. Required for activation of most nif operons, which are directly involved in nitrogen fixation. The sequence is that of Nif-specific regulatory protein (nifA) from Klebsiella oxytoca.